The sequence spans 272 residues: Replication-associated protein A (272 aa).

Residues Ser-11–Phe-114 form the CRESS-DNA virus Rep endonuclease domain. Residues Phe-18–Tyr-21 carry the RCR-1 motif. Glu-52, His-60, and His-62 together coordinate a divalent metal cation. The RCR-2 signature appears at His-60 to His-62. Tyr-100 (for DNA cleavage activity) is an active-site residue. The short motif at Tyr-100 to Lys-103 is the RCR-3 element. A divalent metal cation is bound at residue Glu-104. The tract at residues Ser-175–Phe-187 is oligomerization. Residues Leu-198–Glu-202 form a binding to RBR1 region. Residues Met-221 to Leu-230 are transactivation. The interval Ser-245–Ala-272 is disordered. Positions Arg-254–Pro-264 are enriched in polar residues.

It belongs to the geminiviridae Rep protein family. As to quaternary structure, homooligomer. Interacts with host retinoblastoma-related protein 1 (RBR1), and may thereby deregulate the host cell cycle. Part of the C- and V-complexes which are RepA-Rep-DNA complexes involved in the c-sense and v-sense transcription. Requires Mg(2+) as cofactor. The cofactor is Mn(2+).

It is found in the host nucleus. The protein resides in the host cytoplasm. Functionally, implicated in enhancement of V-sense gene expression. Acts a an inhibitor of C-sense gene transcription. In Maize streak virus genotype A (isolate Nigeria) (MSV), this protein is Replication-associated protein A.